Consider the following 176-residue polypeptide: MTIMIPAWVNGTLTSVEKLEAHVKGLRHKAVSVFVLKGDAVLMQQRAMCKYHTPGLWTNTCCTHPEWDEAPEVCAIRRLDEELGVRGLIPQHRHHLEYRADVGGGLIEHEVVDVFVAEADETLVVLPNPDEVMAVEWVHFDDLVDQVAQHPDRYTPWLRIYLRDHAATIFGELALL.

The Mn(2+) site is built by histidine 22 and histidine 28. The 135-residue stretch at 26–160 (LRHKAVSVFV…PDRYTPWLRI (135 aa)) folds into the Nudix hydrolase domain. Cysteine 62 is a catalytic residue. Position 64 (histidine 64) interacts with Mn(2+). Position 82 (glutamate 82) interacts with Mg(2+). Residues glutamate 108 and glutamate 110 each contribute to the Mn(2+) site. Glutamate 110 is an active-site residue.

It belongs to the IPP isomerase type 1 family. Mg(2+) serves as cofactor. It depends on Mn(2+) as a cofactor.

It is found in the cytoplasm. The enzyme catalyses isopentenyl diphosphate = dimethylallyl diphosphate. It participates in isoprenoid biosynthesis; dimethylallyl diphosphate biosynthesis; dimethylallyl diphosphate from isopentenyl diphosphate: step 1/1. Its pathway is porphyrin-containing compound metabolism; chlorophyll biosynthesis. In terms of biological role, catalyzes the 1,3-allylic rearrangement of the homoallylic substrate isopentenyl (IPP) to its highly electrophilic allylic isomer, dimethylallyl diphosphate (DMAPP). The sequence is that of Isopentenyl-diphosphate Delta-isomerase from Roseobacter denitrificans (strain ATCC 33942 / OCh 114) (Erythrobacter sp. (strain OCh 114)).